The primary structure comprises 436 residues: tRNA(Ile)-lysidine synthase (436 aa).

27–32 (SGGVDS) serves as a coordination point for ATP.

The protein belongs to the tRNA(Ile)-lysidine synthase family.

It localises to the cytoplasm. The enzyme catalyses cytidine(34) in tRNA(Ile2) + L-lysine + ATP = lysidine(34) in tRNA(Ile2) + AMP + diphosphate + H(+). Functionally, ligates lysine onto the cytidine present at position 34 of the AUA codon-specific tRNA(Ile) that contains the anticodon CAU, in an ATP-dependent manner. Cytidine is converted to lysidine, thus changing the amino acid specificity of the tRNA from methionine to isoleucine. The sequence is that of tRNA(Ile)-lysidine synthase from Vibrio vulnificus (strain CMCP6).